Reading from the N-terminus, the 157-residue chain is Probable succinate transporter subunit YjjB (157 aa).

4 consecutive transmembrane segments (helical) span residues 8-28 (LALAQDMILAAIPAVGFAMVF), 50-70 (MILMTSGLNIEWSTFMASMLV), 87-107 (VFTVAAVIPMFPGISAYTAMI), and 129-149 (FLTASSIVGALSIGLSIPGLW).

The protein belongs to the ThrE exporter (TC 2.A.79) family. As to quaternary structure, the transporter is composed of YjjB and YjjP.

It is found in the cell inner membrane. In terms of biological role, involved in succinate export with YjjP. Both proteins are required for export. The sequence is that of Probable succinate transporter subunit YjjB from Escherichia coli O127:H6 (strain E2348/69 / EPEC).